A 223-amino-acid chain; its full sequence is Phosphoglycolate phosphatase (223 aa).

Asp10 acts as the Nucleophile in catalysis. The Mg(2+) site is built by Asp10 and Asp12. Residue Lys149 coordinates substrate. Mg(2+) contacts are provided by Asp172 and Asp176.

The protein belongs to the archaeal SPP-like hydrolase family. It depends on Mg(2+) as a cofactor.

The enzyme catalyses 2-phosphoglycolate + H2O = glycolate + phosphate. Its function is as follows. Catalyzes the dephosphorylation of 2-phosphoglycolate. This Archaeoglobus fulgidus (strain ATCC 49558 / DSM 4304 / JCM 9628 / NBRC 100126 / VC-16) protein is Phosphoglycolate phosphatase.